The following is a 512-amino-acid chain: Sporulation-regulated protein 3 (512 aa).

Positions 31 to 68 (RQSSQGQYAVDSHPPKSPELKHRRQRSSSFVNGKCRNR) are disordered. A Septin-type G domain is found at 106–365 (NGIDFTLMVA…EKCRSEMLRT (260 aa)). Positions 116–123 (GQSGLGKT) are G1 motif. Residues 116-123 (GQSGLGKT), G168, 247-255 (KSDLLTKEE), and R315 each bind GTP. The tract at residues 165–168 (DTPG) is G3 motif. The G4 motif stretch occupies residues 246-249 (AKSD). Coiled-coil stretches lie at residues 376-406 (TKSV…LKNY) and 451-496 (RDWK…KSSN).

This sequence belongs to the TRAFAC class TrmE-Era-EngA-EngB-Septin-like GTPase superfamily. Septin GTPase family. Interacts with other septin proteins such as SPR28 to form a ring at the bud neck.

It is found in the prospore membrane. Its subcellular location is the bud neck. Septins are GTPases involved in cytokinesis that assemble into filaments and form a ring at the cleavage site. May act by recruiting MYO1 and HOF1, a protein involved in septation, to the site of cleavage. Septins are also involved in cell morphogenesis, bud site selection, chitin deposition, cell cycle regulation, cell compartmentalization and spore wall formation. The sequence is that of Sporulation-regulated protein 3 (SPR3) from Saccharomyces cerevisiae (strain ATCC 204508 / S288c) (Baker's yeast).